Here is a 339-residue protein sequence, read N- to C-terminus: Ribosomal RNA large subunit methyltransferase M (339 aa).

Residues Ser-176, 206 to 209 (APGG), Asp-225, Asp-245, and Asp-261 each bind S-adenosyl-L-methionine. Lys-290 (proton acceptor) is an active-site residue.

It belongs to the class I-like SAM-binding methyltransferase superfamily. RNA methyltransferase RlmE family. RlmM subfamily. Monomer.

It is found in the cytoplasm. The catalysed reaction is cytidine(2498) in 23S rRNA + S-adenosyl-L-methionine = 2'-O-methylcytidine(2498) in 23S rRNA + S-adenosyl-L-homocysteine + H(+). Its function is as follows. Catalyzes the 2'-O-methylation at nucleotide C2498 in 23S rRNA. In Halorhodospira halophila (strain DSM 244 / SL1) (Ectothiorhodospira halophila (strain DSM 244 / SL1)), this protein is Ribosomal RNA large subunit methyltransferase M.